Here is an 82-residue protein sequence, read N- to C-terminus: UPF0180 protein BH2667 (82 aa).

This sequence belongs to the UPF0180 family.

The protein is UPF0180 protein BH2667 of Halalkalibacterium halodurans (strain ATCC BAA-125 / DSM 18197 / FERM 7344 / JCM 9153 / C-125) (Bacillus halodurans).